Consider the following 88-residue polypeptide: Probable Fe(2+)-trafficking protein (88 aa).

Belongs to the Fe(2+)-trafficking protein family.

Could be a mediator in iron transactions between iron acquisition and iron-requiring processes, such as synthesis and/or repair of Fe-S clusters in biosynthetic enzymes. The chain is Probable Fe(2+)-trafficking protein from Alkalilimnicola ehrlichii (strain ATCC BAA-1101 / DSM 17681 / MLHE-1).